The following is a 428-amino-acid chain: Flotillin-2 (428 aa).

Residue G2 is the site of N-myristoyl glycine attachment. C4 carries S-palmitoyl cysteine; by ZDHHC5 lipidation. C19 carries the S-palmitoyl cysteine lipid modification. C20 carries S-palmitoyl cysteine; by ZDHHC5 lipidation. S405 is subject to Phosphoserine.

This sequence belongs to the band 7/mec-2 family. Flotillin subfamily. As to quaternary structure, heterooligomeric complex of flotillin-1 and flotillin-2 and caveolin-1 and caveolin-2. Interacts with ECPAS. Post-translationally, ZDHHC5-catalyzed palmitoylation predominantly occurs at Cys-4. ZDHHC5-catalyzed palmitoylation may be required for the formation of higher-order complexes and for neurite outgrowth in cultured neural stem cells. In terms of tissue distribution, in skin, expressed in epidermis and epidermal appendages but not in dermis. Expressed in all layers of the epidermis except the basal layer. In hair follicles, expressed in the suprabasal layer but not the basal layer. Also expressed in melanoma and carcinoma cell lines, fibroblasts and foreskin melanocytes.

It localises to the cell membrane. Its subcellular location is the membrane. The protein localises to the caveola. It is found in the endosome. Functionally, may act as a scaffolding protein within caveolar membranes, functionally participating in formation of caveolae or caveolae-like vesicles. May be involved in epidermal cell adhesion and epidermal structure and function. The polypeptide is Flotillin-2 (FLOT2) (Homo sapiens (Human)).